A 447-amino-acid chain; its full sequence is Glutamate--tRNA ligase 1 (447 aa).

The 'HIGH' region motif lies at proline 10–asparagine 20. Residues lysine 240–arginine 244 carry the 'KMSKS' region motif. An ATP-binding site is contributed by lysine 243.

The protein belongs to the class-I aminoacyl-tRNA synthetase family. Glutamate--tRNA ligase type 1 subfamily. Monomer.

It localises to the cytoplasm. It carries out the reaction tRNA(Glu) + L-glutamate + ATP = L-glutamyl-tRNA(Glu) + AMP + diphosphate. Functionally, catalyzes the attachment of glutamate to tRNA(Glu) in a two-step reaction: glutamate is first activated by ATP to form Glu-AMP and then transferred to the acceptor end of tRNA(Glu). This is Glutamate--tRNA ligase 1 from Rickettsia akari (strain Hartford).